The following is a 252-amino-acid chain: Imidazole glycerol phosphate synthase subunit HisF (252 aa).

Active-site residues include Asp-11 and Asp-130.

The protein belongs to the HisA/HisF family. Heterodimer of HisH and HisF.

Its subcellular location is the cytoplasm. The enzyme catalyses 5-[(5-phospho-1-deoxy-D-ribulos-1-ylimino)methylamino]-1-(5-phospho-beta-D-ribosyl)imidazole-4-carboxamide + L-glutamine = D-erythro-1-(imidazol-4-yl)glycerol 3-phosphate + 5-amino-1-(5-phospho-beta-D-ribosyl)imidazole-4-carboxamide + L-glutamate + H(+). It participates in amino-acid biosynthesis; L-histidine biosynthesis; L-histidine from 5-phospho-alpha-D-ribose 1-diphosphate: step 5/9. Functionally, IGPS catalyzes the conversion of PRFAR and glutamine to IGP, AICAR and glutamate. The HisF subunit catalyzes the cyclization activity that produces IGP and AICAR from PRFAR using the ammonia provided by the HisH subunit. The sequence is that of Imidazole glycerol phosphate synthase subunit HisF from Hydrogenobaculum sp. (strain Y04AAS1).